Here is a 28-residue protein sequence, read N- to C-terminus: Caerulein precursor fragment B1 (28 aa).

Belongs to the gastrin/cholecystokinin family. In terms of tissue distribution, expressed by the skin glands.

Its subcellular location is the secreted. In terms of biological role, peptide CPF-B1: Has antimicrobial activity against Gram-negative bacteria E.coli ATCC 25922 (MIC=5 uM) and multidrug-resistant A.baumannii (MIC=4-8 uM), against Gram-positive bacteria S.aureus ATCC 25923 (MIC=5 uM) and methicillin-resistant S.aureus and against fungus C.albicans ATCC 90028 (MIC=25 uM). Has some hemolytic activity against human erythrocytes at high concentrations. This chain is Caerulein precursor fragment B1, found in Xenopus borealis (Kenyan clawed frog).